A 327-amino-acid chain; its full sequence is DNA polymerase III subunit delta' (327 aa).

As to quaternary structure, DNA polymerase III contains a core (composed of alpha, epsilon and theta chains) that associates with a tau subunit. This core dimerizes to form the POLIII' complex. PolIII' associates with the gamma complex (composed of gamma, delta, delta', psi and chi chains) and with the beta chain to form the complete DNA polymerase III complex.

It carries out the reaction DNA(n) + a 2'-deoxyribonucleoside 5'-triphosphate = DNA(n+1) + diphosphate. In terms of biological role, DNA polymerase III is a complex, multichain enzyme responsible for most of the replicative synthesis in bacteria. This DNA polymerase also exhibits 3' to 5' exonuclease activity. The protein is DNA polymerase III subunit delta' (holB) of Haemophilus influenzae (strain ATCC 51907 / DSM 11121 / KW20 / Rd).